The sequence spans 734 residues: Photosystem I P700 chlorophyll a apoprotein A2 (734 aa).

A run of 8 helical transmembrane segments spans residues I46 to A69, L135 to E158, L175 to I199, I273 to Y291, L330 to Y353, A369 to T395, A417 to H439, and F517 to S535. [4Fe-4S] cluster-binding residues include C559 and C568. The next 2 membrane-spanning stretches (helical) occupy residues A575–W596 and L643–I665. The chlorophyll a site is built by H654, M662, and Y670. W671 contacts phylloquinone. The helical transmembrane segment at L707–P727 threads the bilayer.

This sequence belongs to the PsaA/PsaB family. In terms of assembly, the PsaA/B heterodimer binds the P700 chlorophyll special pair and subsequent electron acceptors. PSI consists of a core antenna complex that captures photons, and an electron transfer chain that converts photonic excitation into a charge separation. The eukaryotic PSI reaction center is composed of at least 11 subunits. It depends on P700 is a chlorophyll a/chlorophyll a' dimer, A0 is one or more chlorophyll a, A1 is one or both phylloquinones and FX is a shared 4Fe-4S iron-sulfur center. as a cofactor.

It localises to the plastid. The protein resides in the chloroplast thylakoid membrane. The enzyme catalyses reduced [plastocyanin] + hnu + oxidized [2Fe-2S]-[ferredoxin] = oxidized [plastocyanin] + reduced [2Fe-2S]-[ferredoxin]. Functionally, psaA and PsaB bind P700, the primary electron donor of photosystem I (PSI), as well as the electron acceptors A0, A1 and FX. PSI is a plastocyanin-ferredoxin oxidoreductase, converting photonic excitation into a charge separation, which transfers an electron from the donor P700 chlorophyll pair to the spectroscopically characterized acceptors A0, A1, FX, FA and FB in turn. Oxidized P700 is reduced on the lumenal side of the thylakoid membrane by plastocyanin. This Selaginella uncinata (Blue spike-moss) protein is Photosystem I P700 chlorophyll a apoprotein A2.